Here is a 344-residue protein sequence, read N- to C-terminus: GTPase Obg (344 aa).

An Obg domain is found at 1–159; that stretch reads MKFLDEAKVY…MWLILRLKLI (159 aa). Residues 160 to 327 form the OBG-type G domain; that stretch reads ADAGLVGLPN…ALRAIQAQLD (168 aa). GTP is bound by residues 166–173, 191–195, 212–215, 279–282, and 308–310; these read GLPNAGKS, FTTLH, DIPG, SKAD, and SAA. S173 and T193 together coordinate Mg(2+).

Belongs to the TRAFAC class OBG-HflX-like GTPase superfamily. OBG GTPase family. As to quaternary structure, monomer. Requires Mg(2+) as cofactor.

It is found in the cytoplasm. Functionally, an essential GTPase which binds GTP, GDP and possibly (p)ppGpp with moderate affinity, with high nucleotide exchange rates and a fairly low GTP hydrolysis rate. Plays a role in control of the cell cycle, stress response, ribosome biogenesis and in those bacteria that undergo differentiation, in morphogenesis control. The protein is GTPase Obg of Methylorubrum populi (strain ATCC BAA-705 / NCIMB 13946 / BJ001) (Methylobacterium populi).